The chain runs to 77 residues: Conotoxin VnMEKL-0111 (77 aa).

Residues 1 to 19 form the signal peptide; the sequence is MEKLTILLLVAAVLMSTQA. The propeptide occupies 20 to 46; sequence LIQHDGEKSQKAKMKFLTARTLSAKTR. Intrachain disulfides connect Cys-50/Cys-66, Cys-57/Cys-71, and Cys-65/Cys-75.

Belongs to the conotoxin O2 superfamily. As to expression, expressed by the venom duct.

The protein localises to the secreted. This is Conotoxin VnMEKL-0111 from Conus ventricosus (Mediterranean cone).